Here is a 255-residue protein sequence, read N- to C-terminus: Small ribosomal subunit protein eS4 (255 aa).

The S4 RNA-binding domain occupies 44 to 107 (IPLLILVRDV…DEYYRMIPYP (64 aa)).

It belongs to the eukaryotic ribosomal protein eS4 family.

This Ignicoccus hospitalis (strain KIN4/I / DSM 18386 / JCM 14125) protein is Small ribosomal subunit protein eS4.